Reading from the N-terminus, the 656-residue chain is DNA mismatch repair protein MutL (656 aa).

The protein belongs to the DNA mismatch repair MutL/HexB family.

Its function is as follows. This protein is involved in the repair of mismatches in DNA. It is required for dam-dependent methyl-directed DNA mismatch repair. May act as a 'molecular matchmaker', a protein that promotes the formation of a stable complex between two or more DNA-binding proteins in an ATP-dependent manner without itself being part of a final effector complex. The protein is DNA mismatch repair protein MutL of Lactococcus lactis subsp. lactis (strain IL1403) (Streptococcus lactis).